The chain runs to 357 residues: Protein RecA (357 aa).

79 to 86 is a binding site for ATP; it reads GPESSGKT.

The protein belongs to the RecA family.

It is found in the cytoplasm. Its function is as follows. Can catalyze the hydrolysis of ATP in the presence of single-stranded DNA, the ATP-dependent uptake of single-stranded DNA by duplex DNA, and the ATP-dependent hybridization of homologous single-stranded DNAs. It interacts with LexA causing its activation and leading to its autocatalytic cleavage. The sequence is that of Protein RecA from Chloroherpeton thalassium (strain ATCC 35110 / GB-78).